A 221-amino-acid chain; its full sequence is ATP phosphoribosyltransferase (221 aa).

It belongs to the ATP phosphoribosyltransferase family. Short subfamily. In terms of assembly, heteromultimer composed of HisG and HisZ subunits.

It is found in the cytoplasm. It carries out the reaction 1-(5-phospho-beta-D-ribosyl)-ATP + diphosphate = 5-phospho-alpha-D-ribose 1-diphosphate + ATP. It functions in the pathway amino-acid biosynthesis; L-histidine biosynthesis; L-histidine from 5-phospho-alpha-D-ribose 1-diphosphate: step 1/9. In terms of biological role, catalyzes the condensation of ATP and 5-phosphoribose 1-diphosphate to form N'-(5'-phosphoribosyl)-ATP (PR-ATP). Has a crucial role in the pathway because the rate of histidine biosynthesis seems to be controlled primarily by regulation of HisG enzymatic activity. The protein is ATP phosphoribosyltransferase of Neisseria gonorrhoeae (strain ATCC 700825 / FA 1090).